We begin with the raw amino-acid sequence, 51 residues long: Magnetosome protein Mms5 (51 aa).

Over 1–12 (MLSAKGVSLGLG) the chain is Lumenal. An LG region region spans residues 9–16 (LGLGLGLG). The chain crosses the membrane as a helical span at residues 13–33 (LGLGAWGPVLLGVVGVAGAIA). The Cytoplasmic portion of the chain corresponds to 34–51 (LYGYYKNRNAEPAAAEAV).

The protein belongs to the magnetosome MamD/Mms5 family. In terms of processing, seen in gels as a band of about 5 kDa, with an N-terminus that corresponds to residue 8, suggesting it may undergo N-terminal cleavage.

The protein localises to the magnetosome membrane. Might be involved in magnetite crystal growth. The sequence is that of Magnetosome protein Mms5 from Paramagnetospirillum magneticum (strain ATCC 700264 / AMB-1) (Magnetospirillum magneticum).